The chain runs to 310 residues: Malate dehydrogenase (310 aa).

NAD(+)-binding positions include 7 to 12 (GAGNVG) and Asp32. Substrate-binding residues include Arg81 and Arg87. NAD(+) is bound by residues Asn94 and 117 to 119 (VSN). Residues Asn119 and Arg150 each contribute to the substrate site. His174 functions as the Proton acceptor in the catalytic mechanism.

Belongs to the LDH/MDH superfamily. MDH type 3 family.

It carries out the reaction (S)-malate + NAD(+) = oxaloacetate + NADH + H(+). Catalyzes the reversible oxidation of malate to oxaloacetate. The sequence is that of Malate dehydrogenase from Chlorobium limicola (strain DSM 245 / NBRC 103803 / 6330).